The chain runs to 279 residues: Zinc finger CCCH domain-containing protein 1 (279 aa).

The interval 20–45 is disordered; it reads DVIVLSPGPPARRRPPPVKAVEPESG. 2 consecutive C3H1-type zinc fingers follow at residues 56–84 and 139–167; these read FYKT…HGDE and RAIT…HVSA.

The chain is Zinc finger CCCH domain-containing protein 1 from Oryza sativa subsp. japonica (Rice).